The chain runs to 428 residues: C4-dicarboxylate transport protein (428 aa).

Transmembrane regions (helical) follow at residues 8–28 (SLYV…HFYP), 44–64 (LIKM…IAGM), 76–96 (VALL…LIIV), 142–162 (IGAF…LFGF), 184–204 (VIFG…FGAM), 222–242 (LIIC…GSIA), 289–309 (VVGL…SIYL), 326–346 (IFHQ…AAGV), and 352–372 (IVLA…LALI).

It belongs to the dicarboxylate/amino acid:cation symporter (DAACS) (TC 2.A.23) family.

The protein resides in the cell inner membrane. Responsible for the transport of dicarboxylates such as succinate, fumarate, and malate from the periplasm across the membrane. The chain is C4-dicarboxylate transport protein from Klebsiella pneumoniae subsp. pneumoniae (strain ATCC 700721 / MGH 78578).